Here is a 103-residue protein sequence, read N- to C-terminus: Integration host factor subunit alpha (103 aa).

Residues phenylalanine 51–isoleucine 73 form a disordered region.

This sequence belongs to the bacterial histone-like protein family. As to quaternary structure, heterodimer of an alpha and a beta chain.

Its function is as follows. This protein is one of the two subunits of integration host factor, a specific DNA-binding protein that functions in genetic recombination as well as in transcriptional and translational control. This Azoarcus sp. (strain BH72) protein is Integration host factor subunit alpha.